Reading from the N-terminus, the 100-residue chain is MKRREAVCAHRHFLGTGKPPHPLGRSIPVEPCPGLPAFAEVDLLSLLVPIKISSTPPSGSRLDPQIASSAFPGLGSLGGQDSSGSLVQRASCELESPYEL.

The segment at 73–100 is disordered; sequence GLGSLGGQDSSGSLVQRASCELESPYEL.

As to expression, expressed in the testis but not in any other non-reproductive tissues (at protein level). Mainly located in spermatogenic cells in seminiferous tubules of adult testis.

The protein localises to the cytoplasm. The sequence is that of Testis development-related protein 1 (TDRG1) from Homo sapiens (Human).